The chain runs to 910 residues: Eukaryotic translation initiation factor 3 subunit C (910 aa).

The interval 1-21 (MSRFFANGSESESESSEEEIQ) is disordered. A compositionally biased stretch (acidic residues) spans 11 to 20 (SESESSEEEI). 4 positions are modified to phosphoserine: Ser-34, Ser-165, Ser-176, and Ser-185. The segment at 157–279 (FREAPDQESE…IRKRAEDDED (123 aa)) is disordered. A compositionally biased stretch (acidic residues) spans 162-186 (DQESEAEDEVVALESDGGDAGDDSD). Residues 194–207 (AVPKAVKSAPAKAA) are compositionally biased toward low complexity. A compositionally biased stretch (acidic residues) spans 209-235 (ADDDDSDDSIDWDSDSESETESSDDEN). Residues 240–268 (MRERFLKRTTEKEEKDDDKRKDKRKEQKT) show a composition bias toward basic and acidic residues. Residues 639–815 (FHMHINLELL…ETVGMHRSEP (177 aa)) form the PCI domain. Residues 847–910 (FFQRGNMGNR…QQQVQTIDEE (64 aa)) are disordered. The segment covering 862-874 (NRNQNNQGGNWLG) has biased composition (low complexity). The segment covering 882–891 (RNRNQRGHHK) has biased composition (basic residues). Low complexity predominate over residues 895 to 910 (DRQQQQQQQVQTIDEE).

The protein belongs to the eIF-3 subunit C family. In terms of assembly, component of the eukaryotic translation initiation factor 3 (eIF-3) complex. The eIF-3 complex interacts with pix.

Its subcellular location is the cytoplasm. Its function is as follows. Component of the eukaryotic translation initiation factor 3 (eIF-3) complex, which is involved in protein synthesis of a specialized repertoire of mRNAs and, together with other initiation factors, stimulates binding of mRNA and methionyl-tRNAi to the 40S ribosome. The eIF-3 complex specifically targets and initiates translation of a subset of mRNAs involved in cell proliferation. The protein is Eukaryotic translation initiation factor 3 subunit C of Drosophila melanogaster (Fruit fly).